Reading from the N-terminus, the 869-residue chain is Ubiquitin carboxyl-terminal hydrolase 29 (869 aa).

Polar residues-rich tracts occupy residues 104–120 and 140–150; these read SSTP…MSSQ and SLNTTPESGTP. The disordered stretch occupies residues 104-226; the sequence is SSTPCESQQP…KAVTLREQEK (123 aa). Positions 187–200 are enriched in basic and acidic residues; sequence VNKDIPKENTPDQK. Residues 201-212 show a composition bias toward basic residues; that stretch reads KKSRRYYSRNRG. The segment covering 213–226 has biased composition (basic and acidic residues); that stretch reads GKAEKAVTLREQEK. The region spanning 289–826 is the USP domain; sequence EGFPNLGNTC…SGYIFFYMHN (538 aa). Residue C298 is the Nucleophile of the active site. Positions 723 to 754 are disordered; that stretch reads SQEDPEKDLSRSPELQEDDPHSFAFGSDDSKD. The active-site Proton acceptor is H781.

This sequence belongs to the peptidase C19 family. In terms of tissue distribution, predominantly expressed in brain and testis. Highest expression levels in adult brain, especially in the cerebral cortex and hippocampus, and in the forebrain, face, and limb buds of midgestation mouse embryos.

It is found in the cytoplasm. The protein resides in the perinuclear region. It carries out the reaction Thiol-dependent hydrolysis of ester, thioester, amide, peptide and isopeptide bonds formed by the C-terminal Gly of ubiquitin (a 76-residue protein attached to proteins as an intracellular targeting signal).. Deubiquitinase involved in innate antiviral immunity by mediating 'Lys-48'-linked deubiquitination of CGAS, thereby promoting its stabilization. The sequence is that of Ubiquitin carboxyl-terminal hydrolase 29 from Mus musculus (Mouse).